The primary structure comprises 155 residues: 6,7-dimethyl-8-ribityllumazine synthase (155 aa).

5-amino-6-(D-ribitylamino)uracil-binding positions include W23, 57–59 (AWE), and 81–83 (CVI). Residue 86 to 87 (DT) participates in (2S)-2-hydroxy-3-oxobutyl phosphate binding. H89 functions as the Proton donor in the catalytic mechanism. N114 is a 5-amino-6-(D-ribitylamino)uracil binding site. R128 is a binding site for (2S)-2-hydroxy-3-oxobutyl phosphate.

This sequence belongs to the DMRL synthase family. In terms of assembly, forms an icosahedral capsid composed of 60 subunits, arranged as a dodecamer of pentamers.

It catalyses the reaction (2S)-2-hydroxy-3-oxobutyl phosphate + 5-amino-6-(D-ribitylamino)uracil = 6,7-dimethyl-8-(1-D-ribityl)lumazine + phosphate + 2 H2O + H(+). It functions in the pathway cofactor biosynthesis; riboflavin biosynthesis; riboflavin from 2-hydroxy-3-oxobutyl phosphate and 5-amino-6-(D-ribitylamino)uracil: step 1/2. In terms of biological role, catalyzes the formation of 6,7-dimethyl-8-ribityllumazine by condensation of 5-amino-6-(D-ribitylamino)uracil with 3,4-dihydroxy-2-butanone 4-phosphate. This is the penultimate step in the biosynthesis of riboflavin. The chain is 6,7-dimethyl-8-ribityllumazine synthase from Stenotrophomonas maltophilia (strain R551-3).